A 487-amino-acid chain; its full sequence is Glutamyl-tRNA(Gln) amidotransferase subunit A (487 aa).

Catalysis depends on charge relay system residues K75 and S150. The active-site Acyl-ester intermediate is S174.

It belongs to the amidase family. GatA subfamily. Heterotrimer of A, B and C subunits.

It catalyses the reaction L-glutamyl-tRNA(Gln) + L-glutamine + ATP + H2O = L-glutaminyl-tRNA(Gln) + L-glutamate + ADP + phosphate + H(+). Functionally, allows the formation of correctly charged Gln-tRNA(Gln) through the transamidation of misacylated Glu-tRNA(Gln) in organisms which lack glutaminyl-tRNA synthetase. The reaction takes place in the presence of glutamine and ATP through an activated gamma-phospho-Glu-tRNA(Gln). This Syntrophomonas wolfei subsp. wolfei (strain DSM 2245B / Goettingen) protein is Glutamyl-tRNA(Gln) amidotransferase subunit A.